Here is a 95-residue protein sequence, read N- to C-terminus: SCYDLCQPCGPTPLANSCNEPCVRQCQDSRVVIQPSPVVVTLPGPILSSFPQNTAVGSTSAAVGSILSEQGVPISSGGFSLSGLGGRSYSRYLPC.

Residue Ser-1 is modified to N-acetylserine.

Belongs to the avian keratin family. In terms of assembly, the avian keratins (F-ker, S-ker, C-ker and B-ker) are a complex mixture of very similar polypeptides.

The chain is Feather keratin B-4 from Columba livia (Rock dove).